Consider the following 359-residue polypeptide: Ornithine carbamoyltransferase, mitochondrial (359 aa).

Residues 1–24 (MASLRSVLKSQSLRHTVRSYSSQT) constitute a mitochondrion transit peptide. Carbamoyl phosphate is bound by residues 87–90 (STRT), arginine 138, histidine 165, and glutamine 168. Residues asparagine 205, aspartate 271, serine 275, and methionine 276 each contribute to the L-ornithine site. Cysteine 313 (proton acceptor) is an active-site residue. Residues 313–314 (CL) and arginine 340 contribute to the carbamoyl phosphate site.

It belongs to the aspartate/ornithine carbamoyltransferase superfamily. OTCase family. As to quaternary structure, homotrimer.

The protein resides in the mitochondrion matrix. The catalysed reaction is carbamoyl phosphate + L-ornithine = L-citrulline + phosphate + H(+). Its pathway is amino-acid biosynthesis; L-arginine biosynthesis; L-arginine from L-ornithine and carbamoyl phosphate: step 1/3. The chain is Ornithine carbamoyltransferase, mitochondrial (argB) from Emericella nidulans (strain FGSC A4 / ATCC 38163 / CBS 112.46 / NRRL 194 / M139) (Aspergillus nidulans).